Reading from the N-terminus, the 761-residue chain is Phosphoribosylformylglycinamidine synthase subunit PurL (761 aa).

His58 is a catalytic residue. 2 residues coordinate ATP: Tyr61 and Lys105. Residue Glu107 participates in Mg(2+) binding. Substrate contacts are provided by residues 108 to 111 (SHNH) and Arg130. His109 serves as the catalytic Proton acceptor. Mg(2+) is bound at residue Asp131. Gln259 lines the substrate pocket. Mg(2+) is bound at residue Asp287. Position 331 to 333 (331 to 333 (ESQ)) interacts with substrate. ATP contacts are provided by Asn519 and Gly556. Asn557 serves as a coordination point for Mg(2+). Ser559 contributes to the substrate binding site.

This sequence belongs to the FGAMS family. Monomer. Part of the FGAM synthase complex composed of 1 PurL, 1 PurQ and 2 PurS subunits.

The protein resides in the cytoplasm. The catalysed reaction is N(2)-formyl-N(1)-(5-phospho-beta-D-ribosyl)glycinamide + L-glutamine + ATP + H2O = 2-formamido-N(1)-(5-O-phospho-beta-D-ribosyl)acetamidine + L-glutamate + ADP + phosphate + H(+). The protein operates within purine metabolism; IMP biosynthesis via de novo pathway; 5-amino-1-(5-phospho-D-ribosyl)imidazole from N(2)-formyl-N(1)-(5-phospho-D-ribosyl)glycinamide: step 1/2. Functionally, part of the phosphoribosylformylglycinamidine synthase complex involved in the purines biosynthetic pathway. Catalyzes the ATP-dependent conversion of formylglycinamide ribonucleotide (FGAR) and glutamine to yield formylglycinamidine ribonucleotide (FGAM) and glutamate. The FGAM synthase complex is composed of three subunits. PurQ produces an ammonia molecule by converting glutamine to glutamate. PurL transfers the ammonia molecule to FGAR to form FGAM in an ATP-dependent manner. PurS interacts with PurQ and PurL and is thought to assist in the transfer of the ammonia molecule from PurQ to PurL. The sequence is that of Phosphoribosylformylglycinamidine synthase subunit PurL from Rhodococcus opacus (strain B4).